Consider the following 250-residue polypeptide: High affinity immunoglobulin epsilon receptor subunit alpha (250 aa).

The first 23 residues, 1–23 (MVTGRSAQLCLALLFMSLDVILT), serve as a signal peptide directing secretion. Over 24-204 (ATEKSVLTLD…AYKCKYYWLQ (181 aa)) the chain is Extracellular. The Ig-like 1 domain maps to 28–104 (SVLTLDPPWI…QGLFKSKPVY (77 aa)). The cysteines at positions 49 and 92 are disulfide-linked. N-linked (GlcNAc...) asparagine glycans are attached at residues N58, N66, N73, N106, N152, and N167. Residues 114-181 (LQTSADMVLV…YHCKGYLRQV (68 aa)) enclose the Ig-like 2 domain. Residues C131 and C174 are joined by a disulfide bond. Residues 205–223 (LIFPLLVAILFAVDTGLLL) traverse the membrane as a helical segment. The Cytoplasmic segment spans residues 224 to 250 (STEEQFKSVLEIQKTGKYKKVETELLT).

As to quaternary structure, tetramer of an alpha chain, a beta chain, and two disulfide linked gamma chains. Interacts with IGHE (via CH3 region). Expressed in bone marrow mast cells, as well as in the pineal gland at night.

Its subcellular location is the cell membrane. High-affinity receptor for immunoglobulin epsilon/IgE. Mediates IgE effector functions in myeloid cells. Upon IgE binding and antigen/allergen cross-linking initiates signaling pathways that lead to myeloid cell activation and differentiation. On mast cells, basophils and eosinophils stimulates the secretion of vasoactive amines, lipid mediators and cytokines that contribute to inflammatory response, tissue remodeling and cytotoxicity against microbes. Triggers the immediate hypersensitivity response to allergens as a host defense mechanism against helminth parasites, pathogenic bacteria and venom toxicity. When dysregulated, it can elicit harmful life-threatening allergic and anaphylactic reactions. The sequence is that of High affinity immunoglobulin epsilon receptor subunit alpha (Fcer1a) from Mus musculus (Mouse).